Consider the following 399-residue polypeptide: Phosphomevalonate dehydratase large subunit (399 aa).

5 residues coordinate (R)-5-phosphomevalonate: Gly54, Val55, Ser56, Asn85, and Pro86. Residue Cys125 coordinates [4Fe-4S] cluster. Glu144 and Ser145 together coordinate (R)-5-phosphomevalonate. [4Fe-4S] cluster contacts are provided by Cys298 and Cys355. Lys375 is a binding site for (R)-5-phosphomevalonate.

This sequence belongs to the AcnX type II large subunit family. As to quaternary structure, heterodimer composed of a large subunit (PMDh-L) and a small subunit (PMDh-S). [4Fe-4S] cluster is required as a cofactor.

It carries out the reaction (R)-5-phosphomevalonate = (2E)-3-methyl-5-phosphooxypent-2-enoate + H2O. It functions in the pathway isoprenoid biosynthesis; isopentenyl diphosphate biosynthesis via mevalonate pathway. Component of a hydro-lyase that catalyzes the dehydration of mevalonate 5-phosphate (MVA5P) to form trans-anhydromevalonate 5-phosphate (tAHMP). Involved in the archaeal mevalonate (MVA) pathway, which provides fundamental precursors for isoprenoid biosynthesis, such as isopentenyl diphosphate (IPP) and dimethylallyl diphosphate (DMAPP). This is Phosphomevalonate dehydratase large subunit from Methanothermobacter thermautotrophicus (strain ATCC 29096 / DSM 1053 / JCM 10044 / NBRC 100330 / Delta H) (Methanobacterium thermoautotrophicum).